Here is a 667-residue protein sequence, read N- to C-terminus: Probable Na(+)/H(+) antiporter nhx-9 (667 aa).

The next 8 helical transmembrane spans lie at 41–61 (VYVI…FNLM), 73–93 (LLII…LSGA), 97–117 (SHTF…YFMP), 128–148 (VLVF…GSLL), 165–185 (ILVF…AVFE), 192–212 (FLFI…VVLY), 236–256 (LSFF…AIAA), and 268–288 (ILAP…AEMV). Residue asparagine 310 is glycosylated (N-linked (GlcNAc...) asparagine). 4 consecutive transmembrane segments (helical) span residues 325 to 345 (MLAQ…TISS), 351 to 371 (LYFI…GIVV), 390 to 410 (FIMS…VSIP), and 418 to 438 (MFIT…GITI). Positions 637–667 (TEQLPSETPFHSGRRQSTGDLNATRRADFNV) are disordered. Residue threonine 644 is modified to Phosphothreonine.

Belongs to the monovalent cation:proton antiporter 1 (CPA1) transporter (TC 2.A.36) family. Phosphorylated. As to expression, in early stage larva, expressed in the twin excretory cell processes. At later larval stages, expression is more restricted, resulting in a 'beads on a chain' appearance.

It is found in the cell membrane. In terms of biological role, serves some physiological function other than regulation of cellular pH. The protein is Probable Na(+)/H(+) antiporter nhx-9 (nhx-9) of Caenorhabditis elegans.